The following is a 484-amino-acid chain: Glutamate--tRNA ligase (484 aa).

A 'HIGH' region motif is present at residues 9-19; sequence PSPTGNLHIGT. Residues cysteine 98, cysteine 100, histidine 125, and histidine 127 each contribute to the Zn(2+) site. The 'KMSKS' region motif lies at 250–254; that stretch reads KLSKR. Residue lysine 253 participates in ATP binding.

The protein belongs to the class-I aminoacyl-tRNA synthetase family. Glutamate--tRNA ligase type 1 subfamily. Monomer. It depends on Zn(2+) as a cofactor.

It is found in the cytoplasm. The catalysed reaction is tRNA(Glu) + L-glutamate + ATP = L-glutamyl-tRNA(Glu) + AMP + diphosphate. In terms of biological role, catalyzes the attachment of glutamate to tRNA(Glu) in a two-step reaction: glutamate is first activated by ATP to form Glu-AMP and then transferred to the acceptor end of tRNA(Glu). This is Glutamate--tRNA ligase from Crocosphaera subtropica (strain ATCC 51142 / BH68) (Cyanothece sp. (strain ATCC 51142)).